A 487-amino-acid polypeptide reads, in one-letter code: Probable nuclear hormone receptor HR3 (487 aa).

The nuclear receptor DNA-binding region spans 48 to 123 (IIPCKVCGDK…LGMSRDAVKF (76 aa)). 2 NR C4-type zinc fingers span residues 51–71 (CKVC…CEGC) and 87–111 (CPRN…LQKC). Residues 145–176 (MRAQSDAAPDSSVYDTQTPSSSDQLHHNNYNS) form a disordered region. Residues 157–167 (VYDTQTPSSSD) show a composition bias toward polar residues. One can recognise an NR LBD domain in the interval 237–480 (INDVLIKTLA…PALYKELFSI (244 aa)).

Belongs to the nuclear hormone receptor family. NR1 subfamily.

It is found in the nucleus. In terms of biological role, putative receptor whose ligand is not yet known. The sequence is that of Probable nuclear hormone receptor HR3 from Drosophila melanogaster (Fruit fly).